The chain runs to 360 residues: Phosphoserine aminotransferase (360 aa).

Residue R42 participates in L-glutamate binding. W102, T152, D171, and Q194 together coordinate pyridoxal 5'-phosphate. K195 is modified (N6-(pyridoxal phosphate)lysine). 237–238 (NT) is a pyridoxal 5'-phosphate binding site.

Belongs to the class-V pyridoxal-phosphate-dependent aminotransferase family. SerC subfamily. Homodimer. Pyridoxal 5'-phosphate is required as a cofactor.

The protein localises to the cytoplasm. It carries out the reaction O-phospho-L-serine + 2-oxoglutarate = 3-phosphooxypyruvate + L-glutamate. The catalysed reaction is 4-(phosphooxy)-L-threonine + 2-oxoglutarate = (R)-3-hydroxy-2-oxo-4-phosphooxybutanoate + L-glutamate. It functions in the pathway amino-acid biosynthesis; L-serine biosynthesis; L-serine from 3-phospho-D-glycerate: step 2/3. Its pathway is cofactor biosynthesis; pyridoxine 5'-phosphate biosynthesis; pyridoxine 5'-phosphate from D-erythrose 4-phosphate: step 3/5. In terms of biological role, catalyzes the reversible conversion of 3-phosphohydroxypyruvate to phosphoserine and of 3-hydroxy-2-oxo-4-phosphonooxybutanoate to phosphohydroxythreonine. This Coxiella burnetii (strain CbuG_Q212) (Coxiella burnetii (strain Q212)) protein is Phosphoserine aminotransferase.